Consider the following 312-residue polypeptide: L-lactate dehydrogenase (312 aa).

Positions 14, 35, and 66 each coordinate NAD(+). Residues Gln-83, Arg-90, and 122 to 125 (NPVD) contribute to the substrate site. NAD(+) is bound by residues 120-122 (ASN) and Ser-145. 150-153 (DSAR) provides a ligand contact to substrate. His-177 (proton acceptor) is an active-site residue. At Tyr-220 the chain carries Phosphotyrosine. Thr-229 provides a ligand contact to substrate.

Belongs to the LDH/MDH superfamily. LDH family. Homotetramer.

Its subcellular location is the cytoplasm. It catalyses the reaction (S)-lactate + NAD(+) = pyruvate + NADH + H(+). It participates in fermentation; pyruvate fermentation to lactate; (S)-lactate from pyruvate: step 1/1. Functionally, catalyzes the conversion of lactate to pyruvate. The polypeptide is L-lactate dehydrogenase (Mycoplasma pneumoniae (strain ATCC 29342 / M129 / Subtype 1) (Mycoplasmoides pneumoniae)).